The chain runs to 163 residues: Photosystem II extrinsic protein V (163 aa).

Residues 1 to 26 form the signal peptide; sequence MFRRLIGVVVATVLLTFQLIVGSATA. Heme c is bound by residues cysteine 63, cysteine 66, histidine 67, and histidine 118.

The protein belongs to the cytochrome c family. PsbV subfamily. As to quaternary structure, PSII is composed of 1 copy each of membrane proteins PsbA, PsbB, PsbC, PsbD, PsbE, PsbF, PsbH, PsbI, PsbJ, PsbK, PsbL, PsbM, PsbT, PsbX, PsbY, PsbZ, Psb30/Ycf12, peripheral proteins PsbO, CyanoQ (PsbQ), PsbU, PsbV and a large number of cofactors. It forms dimeric complexes. Requires heme c as cofactor.

Its subcellular location is the cellular thylakoid membrane. In terms of biological role, one of the extrinsic, lumenal subunits of photosystem II (PSII). PSII is a light-driven water plastoquinone oxidoreductase, using light energy to abstract electrons from H(2)O, generating a proton gradient subsequently used for ATP formation. The extrinsic proteins stabilize the structure of photosystem II oxygen-evolving complex (OEC), the ion environment of oxygen evolution and protect the OEC against heat-induced inactivation. Low-potential cytochrome c that plays a role in the OEC of PSII. In Trichormus variabilis (strain ATCC 29413 / PCC 7937) (Anabaena variabilis), this protein is Photosystem II extrinsic protein V.